The following is a 98-amino-acid chain: Small ribosomal subunit protein uS19c (98 aa).

This sequence belongs to the universal ribosomal protein uS19 family.

The protein localises to the plastid. The protein resides in the chloroplast. Protein S19 forms a complex with S13 that binds strongly to the 16S ribosomal RNA. The sequence is that of Small ribosomal subunit protein uS19c from Jasminum nudiflorum (Winter jasmine).